We begin with the raw amino-acid sequence, 161 residues long: Peptidyl-prolyl cis-trans isomerase (161 aa).

In terms of domain architecture, PPIase cyclophilin-type spans 6 to 160 (FFDIKAGDER…KKIIIEDCGE (155 aa)).

This sequence belongs to the cyclophilin-type PPIase family. PPIase A subfamily. In terms of tissue distribution, found mainly in the tegument, gut epithelium, and muscle layers. Also found in the interior of the parasite.

The enzyme catalyses [protein]-peptidylproline (omega=180) = [protein]-peptidylproline (omega=0). Binds cyclosporin A (CsA). CsA mediates some of its effects via an inhibitory action on PPIase. Functionally, PPIases accelerate the folding of proteins. It catalyzes the cis-trans isomerization of proline imidic peptide bonds in oligopeptides. This chain is Peptidyl-prolyl cis-trans isomerase, found in Schistosoma mansoni (Blood fluke).